A 190-amino-acid chain; its full sequence is Putative histone H1.6 (190 aa).

The disordered stretch occupies residues M1 to V29. Residue S2 is modified to N-acetylserine. Low complexity predominate over residues T9 to V29. The 77-residue stretch at A34–E110 folds into the H15 domain. The disordered stretch occupies residues K141–A190. Residues K148–K183 are compositionally biased toward basic residues.

It belongs to the histone H1/H5 family.

It localises to the nucleus. Its subcellular location is the chromosome. Its function is as follows. Histones H1 are necessary for the condensation of nucleosome chains into higher-order structures. This chain is Putative histone H1.6 (hil-6), found in Caenorhabditis elegans.